The sequence spans 327 residues: Protoheme IX farnesyltransferase (327 aa).

7 helical membrane-spanning segments follow: residues 55–75 (LVCT…LNCL), 101–121 (AAFV…VSGV), 124–144 (LAAG…TALL), 152–172 (IVVG…AATG), 180–200 (WLFA…ALLL), 237–257 (FLGI…ILPF), and 278–298 (AKGL…LLVM).

The protein belongs to the UbiA prenyltransferase family. Protoheme IX farnesyltransferase subfamily.

It localises to the cell inner membrane. The catalysed reaction is heme b + (2E,6E)-farnesyl diphosphate + H2O = Fe(II)-heme o + diphosphate. The protein operates within porphyrin-containing compound metabolism; heme O biosynthesis; heme O from protoheme: step 1/1. Converts heme B (protoheme IX) to heme O by substitution of the vinyl group on carbon 2 of heme B porphyrin ring with a hydroxyethyl farnesyl side group. This is Protoheme IX farnesyltransferase from Synechococcus sp. (strain CC9311).